A 365-amino-acid polypeptide reads, in one-letter code: N5-carboxyaminoimidazole ribonucleotide synthase (365 aa).

Residues arginine 93, lysine 132, 137–143 (GYDGKGQ), 168–171 (EEFV), glutamate 176, histidine 199, and 249–250 (NE) contribute to the ATP site. Positions 97–279 (KLFLKKHGFP…QFENLLRAIT (183 aa)) constitute an ATP-grasp domain.

Belongs to the PurK/PurT family. In terms of assembly, homodimer.

The catalysed reaction is 5-amino-1-(5-phospho-beta-D-ribosyl)imidazole + hydrogencarbonate + ATP = 5-carboxyamino-1-(5-phospho-D-ribosyl)imidazole + ADP + phosphate + 2 H(+). It participates in purine metabolism; IMP biosynthesis via de novo pathway; 5-amino-1-(5-phospho-D-ribosyl)imidazole-4-carboxylate from 5-amino-1-(5-phospho-D-ribosyl)imidazole (N5-CAIR route): step 1/2. Its function is as follows. Catalyzes the ATP-dependent conversion of 5-aminoimidazole ribonucleotide (AIR) and HCO(3)(-) to N5-carboxyaminoimidazole ribonucleotide (N5-CAIR). In Aquifex aeolicus (strain VF5), this protein is N5-carboxyaminoimidazole ribonucleotide synthase.